We begin with the raw amino-acid sequence, 209 residues long: Octanoyltransferase (209 aa).

Positions 30-209 constitute a BPL/LPL catalytic domain; the sequence is DHEPEIIYLV…IQTEFNKIFK (180 aa). Residues 69–76, 143–145, and 156–158 contribute to the substrate site; these read RGGKFTFH, AIG, and GVA. The Acyl-thioester intermediate role is filled by Cys174.

Belongs to the LipB family.

Its subcellular location is the cytoplasm. It catalyses the reaction octanoyl-[ACP] + L-lysyl-[protein] = N(6)-octanoyl-L-lysyl-[protein] + holo-[ACP] + H(+). It functions in the pathway protein modification; protein lipoylation via endogenous pathway; protein N(6)-(lipoyl)lysine from octanoyl-[acyl-carrier-protein]: step 1/2. Catalyzes the transfer of endogenously produced octanoic acid from octanoyl-acyl-carrier-protein onto the lipoyl domains of lipoate-dependent enzymes. Lipoyl-ACP can also act as a substrate although octanoyl-ACP is likely to be the physiological substrate. This Rickettsia rickettsii (strain Iowa) protein is Octanoyltransferase.